A 63-amino-acid chain; its full sequence is Large ribosomal subunit protein bL28 (63 aa).

This sequence belongs to the bacterial ribosomal protein bL28 family.

This is Large ribosomal subunit protein bL28 from Clostridium botulinum (strain Alaska E43 / Type E3).